A 279-amino-acid polypeptide reads, in one-letter code: Urease accessory protein UreD (279 aa).

It belongs to the UreD family. As to quaternary structure, ureD, UreF and UreG form a complex that acts as a GTP-hydrolysis-dependent molecular chaperone, activating the urease apoprotein by helping to assemble the nickel containing metallocenter of UreC. The UreE protein probably delivers the nickel.

It is found in the cytoplasm. In terms of biological role, required for maturation of urease via the functional incorporation of the urease nickel metallocenter. This is Urease accessory protein UreD from Nitrosospira multiformis (strain ATCC 25196 / NCIMB 11849 / C 71).